The sequence spans 534 residues: MNPDTFPWLSTLIFFPIMATVALPFIPDPKGKGDPIRWYALVIGLIDFVLLIYAFYTQYDFAESGLQMVEHYDWLPQLGVQWSVGADGLSMPLILLTGFITSLAILASWPVTYKPRLFYFLILAMYGGQIAVFAVQDLLVFFLVWELELVPVYLLLSIWGGYKRLYAATKFILYTAISSLFILVAALAMAFFGPDLTFDLQSLAAKDYPLTFQLLCYTGFLVAFAVKLPIVPLHTWLPDAHGEATAPVHMLLAGILLKMGGYALIRMNVELLPDAHAYFAPALIILGVVNIIYAALTSFAQRNLKRKIAYSSISHMGFVLIGIASFTDLGMSGAVLQMVSHGLIGASLFFLVGATYDRTHTLILEEMGGVAQNMPKIFAMFTTCSMASLALPGMSGFVAELMVFVGLATSDAYSLAFRVPVVILAGIGVILTPIYLLSMLREIFYGPENKELTSHEKLVDAEPREIFVIACLLVPIIGIGLYPKIITQIYDAKTTQLVAYIRPSVPSIAMREAATVASVSDIEMDSSYQAPAIK.

Transmembrane regions (helical) follow at residues 6-26 (FPWLSTLIFFPIMATVALPFI), 38-58 (WYALVIGLIDFVLLIYAFYTQ), 91-111 (MPLILLTGFITSLAILASWPV), 117-137 (LFYFLILAMYGGQIAVFAVQD), 138-158 (LLVFFLVWELELVPVYLLLSI), 171-191 (FILYTAISSLFILVAALAMAF), 214-234 (LLCYTGFLVAFAVKLPIVPLH), 245-265 (TAPVHMLLAGILLKMGGYALI), 279-299 (FAPALIILGVVNIIYAALTSF), 316-336 (MGFVLIGIASFTDLGMSGAVL), 337-357 (QMVSHGLIGASLFFLVGATYD), 377-399 (IFAMFTTCSMASLALPGMSGFVA), 419-439 (VPVVILAGIGVILTPIYLLSM), and 466-486 (IFVIACLLVPIIGIGLYPKII).

The protein belongs to the complex I subunit 4 family.

Its subcellular location is the cellular thylakoid membrane. It catalyses the reaction a plastoquinone + NADH + (n+1) H(+)(in) = a plastoquinol + NAD(+) + n H(+)(out). The enzyme catalyses a plastoquinone + NADPH + (n+1) H(+)(in) = a plastoquinol + NADP(+) + n H(+)(out). Functionally, NDH-1 shuttles electrons from NAD(P)H, via FMN and iron-sulfur (Fe-S) centers, to quinones in the respiratory chain. The immediate electron acceptor for the enzyme in this species is believed to be plastoquinone. Couples the redox reaction to proton translocation (for every two electrons transferred, four hydrogen ions are translocated across the cytoplasmic membrane), and thus conserves the redox energy in a proton gradient. The protein is NAD(P)H-quinone oxidoreductase chain 4 of Acaryochloris marina (strain MBIC 11017).